We begin with the raw amino-acid sequence, 397 residues long: 1-deoxy-D-xylulose 5-phosphate reductoisomerase (397 aa).

Residues threonine 12, glycine 13, serine 14, isoleucine 15, glycine 38, lysine 39, asparagine 40, and asparagine 126 each contribute to the NADPH site. Residue lysine 127 coordinates 1-deoxy-D-xylulose 5-phosphate. An NADPH-binding site is contributed by glutamate 128. Aspartate 152 provides a ligand contact to Mn(2+). Positions 153, 154, 188, and 211 each coordinate 1-deoxy-D-xylulose 5-phosphate. Glutamate 154 serves as a coordination point for Mn(2+). Glycine 217 is an NADPH binding site. The 1-deoxy-D-xylulose 5-phosphate site is built by serine 224, asparagine 229, lysine 230, and glutamate 233. Glutamate 233 lines the Mn(2+) pocket.

This sequence belongs to the DXR family. Mg(2+) is required as a cofactor. The cofactor is Mn(2+).

It carries out the reaction 2-C-methyl-D-erythritol 4-phosphate + NADP(+) = 1-deoxy-D-xylulose 5-phosphate + NADPH + H(+). The protein operates within isoprenoid biosynthesis; isopentenyl diphosphate biosynthesis via DXP pathway; isopentenyl diphosphate from 1-deoxy-D-xylulose 5-phosphate: step 1/6. Its function is as follows. Catalyzes the NADPH-dependent rearrangement and reduction of 1-deoxy-D-xylulose-5-phosphate (DXP) to 2-C-methyl-D-erythritol 4-phosphate (MEP). This Haemophilus influenzae (strain ATCC 51907 / DSM 11121 / KW20 / Rd) protein is 1-deoxy-D-xylulose 5-phosphate reductoisomerase.